The chain runs to 220 residues: MPFRDLILFNLSKFLLTEDEESLEIVSSLCRGFEISYDDLITYFPDRKYHKYISKVFEHVDLSEELSMEFHDTTLRDLVYLRLYKYSKCIRPCYKLGDNLKGIVVIKDRNIYIREANDDLIEYLLKEYTPQIYTYSNERVPITGSKLILCGFSQVTFMAYTTSHITTNKKVDVLVSKKCIDELVDPINYQILQNLFDKGSGTINKILRKIFYSVTGGQTP.

Belongs to the orthopoxvirus OPG087 family. In terms of assembly, interacts with H5 and A18. Might be part of a transcription complex composed at least of OPG087, OPG145, and OPG110.

Involved in postreplicative transcription elongation on intermediate and late genes. This chain is Late transcription elongation factor OPG087 (OPG087), found in Homo sapiens (Human).